The following is a 227-amino-acid chain: MRFDVITLFPDFFTTPLNSGLLGRAFNKNIAKVNLVNPRNYTTDKYKKVDDESYGGGVGMVLKPEPIFAAVESLPTLSKREVILLTPQGKRMHQGLFRELATDYEQLILICGHYEGIDERVQYLVSREVSLGDFVLTGGEIPALALINGVVRLLPGTVGKAESLECESFESGLLDYPQYTRPANFRGWKVPEVLLSGHHAEIARWRYQQQLQRTKSRRPDLLKNDDN.

S-adenosyl-L-methionine is bound by residues Gly-112 and 131 to 136 (LGDFVL).

Belongs to the RNA methyltransferase TrmD family. In terms of assembly, homodimer.

Its subcellular location is the cytoplasm. It carries out the reaction guanosine(37) in tRNA + S-adenosyl-L-methionine = N(1)-methylguanosine(37) in tRNA + S-adenosyl-L-homocysteine + H(+). Its function is as follows. Specifically methylates guanosine-37 in various tRNAs. The polypeptide is tRNA (guanine-N(1)-)-methyltransferase (Trichodesmium erythraeum (strain IMS101)).